Here is a 288-residue protein sequence, read N- to C-terminus: Protein FANTASTIC FOUR 3 (288 aa).

Over residues 48 to 60 (HAEDTRNRNDDKA) the composition is skewed to basic and acidic residues. 3 disordered regions span residues 48–100 (HAED…YYVQ), 146–172 (ETTT…PLTT), and 222–261 (NEFV…IENV). The segment covering 66 to 90 (SDSSGWSSLQSLSSGSSSSTKTTTS) has biased composition (low complexity). Residues 165-217 (DLPPPLTTMRGFQCIQMRPHRENGRLVMTATNAPPRNGCFQADRSNGRLRLSI) enclose the FAF domain. Positions 223 to 256 (EFVENEEETIEPEETEEYEEEEEEEEDEDEDEVM) are enriched in acidic residues.

It belongs to the fantastic four family. In terms of tissue distribution, expressed in the shoot apex, stamens, young leaves and young siliques, but not in old leaves. Detected in provascular and vascular tissue, but not in the vegetative meristem. In inflorescences, restricted to the vasculature and absent from young flowers, except from anthers.

In terms of biological role, able to repress WUS when constitutively overexpressed, but have no effect on CLV3. In Arabidopsis thaliana (Mouse-ear cress), this protein is Protein FANTASTIC FOUR 3 (FAF3).